The following is a 528-amino-acid chain: MSTLAEHVRDTPPAAERPRTYEVRTYGCQMNVHDSERLTGSLEAAGYVSAEGAEADIVVINTCAVRENADNKLYGNLGHLAGVKRRHEGMQIAVGGCLAQKDRATVLEKAPWVDVVFGTHNMGALPTLLERARHNGEAQLEILESLETFPSTLPTKRDEIASGWVSISVGCNNTCTFCIVPALRGKEKDRRPGDILAEIQALVDDGAVEVTLLGQNVNSYGVEFGDRQAFGKLLRAAGAIEGLERIRFTSPHPAAFTDDVIDAMAETPAVMPQLHMPLQSGSDRVLKAMRRSYRSERFLGILDRVRTRIPDAAITTDIIVGFPGETEEDFQETLRVVEAARFSSAFTFQYSIRPGTPAATMEEQVPADVVKERYGRLTALQERISHEENQRVVGRTVEVLVSAHEGRKDGDTRRVTGRAQDGRLVHLDVPAGSGEPRPGDAVEVEITRAAPFHLIADSVDQAPLRIRRTRAGDAWERAQADSCGVPAPAAGTSAGGPPRVSLGLPSLRASTIASAGAVDGSAHPRHRA.

The MTTase N-terminal domain occupies 19–134 (RTYEVRTYGC…LPTLLERARH (116 aa)). Cysteine 28, cysteine 63, cysteine 97, cysteine 171, cysteine 175, and cysteine 178 together coordinate [4Fe-4S] cluster. The 231-residue stretch at 157–387 (RDEIASGWVS…TALQERISHE (231 aa)) folds into the Radical SAM core domain. The TRAM domain occupies 390–460 (QRVVGRTVEV…PFHLIADSVD (71 aa)).

This sequence belongs to the methylthiotransferase family. MiaB subfamily. In terms of assembly, monomer. Requires [4Fe-4S] cluster as cofactor.

It localises to the cytoplasm. It catalyses the reaction N(6)-dimethylallyladenosine(37) in tRNA + (sulfur carrier)-SH + AH2 + 2 S-adenosyl-L-methionine = 2-methylsulfanyl-N(6)-dimethylallyladenosine(37) in tRNA + (sulfur carrier)-H + 5'-deoxyadenosine + L-methionine + A + S-adenosyl-L-homocysteine + 2 H(+). Its function is as follows. Catalyzes the methylthiolation of N6-(dimethylallyl)adenosine (i(6)A), leading to the formation of 2-methylthio-N6-(dimethylallyl)adenosine (ms(2)i(6)A) at position 37 in tRNAs that read codons beginning with uridine. In Clavibacter michiganensis subsp. michiganensis (strain NCPPB 382), this protein is tRNA-2-methylthio-N(6)-dimethylallyladenosine synthase.